The following is a 338-amino-acid chain: 1-aminocyclopropane-1-carboxylate deaminase (338 aa).

At lysine 51 the chain carries N6-(pyridoxal phosphate)lysine. The active-site Nucleophile is the serine 78.

It belongs to the ACC deaminase/D-cysteine desulfhydrase family. In terms of assembly, homotrimer. It depends on pyridoxal 5'-phosphate as a cofactor.

The enzyme catalyses 1-aminocyclopropane-1-carboxylate + H2O = 2-oxobutanoate + NH4(+). Catalyzes a cyclopropane ring-opening reaction, the irreversible conversion of 1-aminocyclopropane-1-carboxylate (ACC) to ammonia and alpha-ketobutyrate. Allows growth on ACC as a nitrogen source. The sequence is that of 1-aminocyclopropane-1-carboxylate deaminase from Acidovorax ebreus (strain TPSY) (Diaphorobacter sp. (strain TPSY)).